The following is a 425-amino-acid chain: Probable sucrose-phosphatase 3a (425 aa).

This sequence belongs to the sucrose phosphatase family. As to quaternary structure, homodimer. The cofactor is Mg(2+).

The enzyme catalyses sucrose 6(F)-phosphate + H2O = sucrose + phosphate. It functions in the pathway glycan biosynthesis; sucrose biosynthesis; sucrose from D-fructose 6-phosphate and UDP-alpha-D-glucose: step 2/2. Functionally, catalyzes the final step of sucrose synthesis. This Arabidopsis thaliana (Mouse-ear cress) protein is Probable sucrose-phosphatase 3a (SPP3A).